The chain runs to 196 residues: Pyridoxal 5'-phosphate synthase subunit PdxT (196 aa).

Residue 46-48 participates in L-glutamine binding; the sequence is GES. Catalysis depends on cysteine 78, which acts as the Nucleophile. L-glutamine contacts are provided by residues arginine 105 and 133-134; that span reads IR. Residues histidine 169 and glutamate 171 each act as charge relay system in the active site.

Belongs to the glutaminase PdxT/SNO family. In the presence of PdxS, forms a dodecamer of heterodimers. Only shows activity in the heterodimer.

The enzyme catalyses aldehydo-D-ribose 5-phosphate + D-glyceraldehyde 3-phosphate + L-glutamine = pyridoxal 5'-phosphate + L-glutamate + phosphate + 3 H2O + H(+). The catalysed reaction is L-glutamine + H2O = L-glutamate + NH4(+). It functions in the pathway cofactor biosynthesis; pyridoxal 5'-phosphate biosynthesis. Its function is as follows. Catalyzes the hydrolysis of glutamine to glutamate and ammonia as part of the biosynthesis of pyridoxal 5'-phosphate. The resulting ammonia molecule is channeled to the active site of PdxS. The sequence is that of Pyridoxal 5'-phosphate synthase subunit PdxT from Geobacillus kaustophilus (strain HTA426).